The chain runs to 69 residues: Putative membrane protein insertion efficiency factor (69 aa).

This sequence belongs to the UPF0161 family.

Its subcellular location is the cell membrane. In terms of biological role, could be involved in insertion of integral membrane proteins into the membrane. This chain is Putative membrane protein insertion efficiency factor, found in Clostridium kluyveri (strain NBRC 12016).